Reading from the N-terminus, the 425-residue chain is Paired box pox-neuro protein (425 aa).

A DNA-binding region (paired) is located at residues 5 to 132 (GQAGVNQLGG…SSINRILRNS (128 aa)). The PAI subdomain stretch occupies residues 8-64 (GVNQLGGVFVNGRPLPDCVRRRIVDLALCGVRPCDISRQLLVSHGCVSKILTRFYET). Residues 84-132 (TVVKKIIRLKEENSGMFAWEIREQLQQQRVCDPSSVPSISSINRILRNS) are RED subdomain. Disordered stretches follow at residues 159–188 (QAGSGPSNGYGGQAPPPPVTVAPPTPAATP), 297–358 (TKSE…RKRN), and 383–425 (LESS…EVVN). Positions 172 to 185 (APPPPVTVAPPTPA) are enriched in pro residues. Composition is skewed to low complexity over residues 323-332 (SSPAALSLTA) and 340-349 (GSAPEASPGS). Residues 402-425 (TPEDEDPAEAEEEQEEEDSVEVVN) show a composition bias toward acidic residues.

As to expression, central and peripheral nervous systems.

The protein localises to the nucleus. In terms of biological role, transcriptional regulator that specifies poly-innervated organs (chemosensory bristle). Also controls the number of neurons. In Drosophila melanogaster (Fruit fly), this protein is Paired box pox-neuro protein (Poxn).